We begin with the raw amino-acid sequence, 264 residues long: Indole-3-glycerol phosphate synthase (264 aa).

Belongs to the TrpC family.

The enzyme catalyses 1-(2-carboxyphenylamino)-1-deoxy-D-ribulose 5-phosphate + H(+) = (1S,2R)-1-C-(indol-3-yl)glycerol 3-phosphate + CO2 + H2O. The protein operates within amino-acid biosynthesis; L-tryptophan biosynthesis; L-tryptophan from chorismate: step 4/5. In Stenotrophomonas maltophilia (strain R551-3), this protein is Indole-3-glycerol phosphate synthase.